The sequence spans 612 residues: MMMNKSKTDWAKDTPCKNITIYGYCKYENDGCIFNHGKPLSTSSNTGGAAAGSAEDSAASGGVTVGNTGKSTFNAKTATSFTPSVAIPDFNNIPSFTPERIVSSPAGDGATAFTPSFNPYGSDSFNPSANVSGPGSAVFAAASGNAGASATAAPRSQSVHVGTGGYLPLAGTAFPTVYPPSHSILQYHLYAPDPPPHLQVPLKANERTPETLFIPNNLREHLLKRNLSALQVFPSDGNLPDIVGDYFGLVPLEFHNRQTGKGRYLGHQNSLYKVFSNFDGKVYIIRRIHDVKTTDVGQISLPFRKWQKVSCPNVVKVKDAFTTLAFGDSSLCVVHDYYPQSNSLYETHVANYTVVPVTQKYLWSYLVQLSNALNEVHRHGLSMNNISLDKVIVTGDPGRIKVGDSAVHDILAFDEGRDIAKEQQADYSAVGALLMDLAQRMLGTRDQPLDSMDIDPLFKRVLAYLLSDEKKTIAEFTALFSHKMLDIISSSQTYSEYIEQHLSRELENGRLFRLMCKLNFIFGRMESSMDIHWSEAGDKFPIILFYDYVFHQVDENGKSVMDLTHVLRCLNKLDTGVSEKIILVTPDEMNCIIISYKELKDSIDSTFRSMTQ.

Residues 10–39 (WAKDTPCKNITIYGYCKYENDGCIFNHGKP) form a C3H1-type zinc finger. A compositionally biased stretch (low complexity) spans 44-62 (SNTGGAAAGSAEDSAASGG). Residues 44–64 (SNTGGAAAGSAEDSAASGGVT) are disordered. 2 consecutive short sequence motifs (PABPC-interacting motif-2 (PAM-2)) follow at residues 84–104 (SVAIPDFNNIPSFTPERIVSS) and 111–131 (TAFTPSFNPYGSDSFNPSANV). The interval 231–481 (QVFPSDGNLP…TIAEFTALFS (251 aa)) is pseudokinase domain. Residues Arg286, 336 to 343 (DYYPQSNS), and 389 to 390 (DK) each bind ATP. The stretch at 482–520 (HKMLDIISSSQTYSEYIEQHLSRELENGRLFRLMCKLNF) forms a coiled coil. The knob domain stretch occupies residues 521 to 612 (IFGRMESSMD…IDSTFRSMTQ (92 aa)).

It belongs to the protein kinase superfamily. PAN3 family. As to quaternary structure, homodimer. Forms a heterotrimer with a catalytic subunit PAN2 to form the poly(A)-nuclease (PAN) deadenylation complex. Interacts (via PAM-2 motif) with poly(A)-binding protein PAB1 (via PABC domain), conferring substrate specificity of the enzyme complex.

Its subcellular location is the cytoplasm. In terms of biological role, regulatory subunit of the poly(A)-nuclease (PAN) deadenylation complex, one of two cytoplasmic mRNA deadenylases involved in mRNA turnover. PAN specifically shortens poly(A) tails of RNA and the activity is stimulated by poly(A)-binding protein PAB1. PAN deadenylation is followed by rapid degradation of the shortened mRNA tails by the CCR4-NOT complex. Deadenylated mRNAs are then degraded by two alternative mechanisms, namely exosome-mediated 3'-5' exonucleolytic degradation, or deadenylation-dependent mRNA decaping and subsequent 5'-3' exonucleolytic degradation by XRN1. May also be involved in post-transcriptional maturation of mRNA poly(A) tails. PAN3 acts as a positive regulator for PAN activity, recruiting the catalytic subunit PAN2 to mRNA via its interaction with RNA and with PAB1. The protein is PAN2-PAN3 deadenylation complex subunit PAN3 of Eremothecium gossypii (strain ATCC 10895 / CBS 109.51 / FGSC 9923 / NRRL Y-1056) (Yeast).